A 197-amino-acid polypeptide reads, in one-letter code: Potassium-transporting ATPase KdpC subunit (197 aa).

The helical transmembrane segment at 7–27 (PAFISLILFTLLFGLIYPLTV) threads the bilayer.

The protein belongs to the KdpC family. As to quaternary structure, the system is composed of three essential subunits: KdpA, KdpB and KdpC.

The protein resides in the cell inner membrane. In terms of biological role, part of the high-affinity ATP-driven potassium transport (or Kdp) system, which catalyzes the hydrolysis of ATP coupled with the electrogenic transport of potassium into the cytoplasm. This subunit acts as a catalytic chaperone that increases the ATP-binding affinity of the ATP-hydrolyzing subunit KdpB by the formation of a transient KdpB/KdpC/ATP ternary complex. In Beijerinckia indica subsp. indica (strain ATCC 9039 / DSM 1715 / NCIMB 8712), this protein is Potassium-transporting ATPase KdpC subunit.